Consider the following 472-residue polypeptide: UDP-glucuronosyltransferase (472 aa).

N-linked (GlcNAc...) asparagine glycosylation is found at asparagine 59, asparagine 227, and asparagine 377. The chain crosses the membrane as a helical span at residues 436–456; the sequence is FGFILLILLTVLWVTLKCCLF.

The protein belongs to the UDP-glycosyltransferase family.

It localises to the microsome membrane. The protein resides in the endoplasmic reticulum membrane. It carries out the reaction glucuronate acceptor + UDP-alpha-D-glucuronate = acceptor beta-D-glucuronoside + UDP + H(+). In terms of biological role, UDPGT is of major importance in the conjugation and subsequent elimination of potentially toxic xenobiotics and endogenous compounds. This chain is UDP-glucuronosyltransferase (ugt3), found in Pleuronectes platessa (European plaice).